Reading from the N-terminus, the 518-residue chain is Membrane-bound lytic murein transglycosylase F (518 aa).

A signal peptide spans 1-21 (MKKLKINYLFIGILALLLAVA). The interval 22–269 (LWPSIPWFGK…RIEEKYLGHG (248 aa)) is non-LT domain. Positions 270-518 (DDFDYVDTRT…SRKGSEEKQN (249 aa)) are LT domain. Residue Glu314 is part of the active site.

This sequence in the N-terminal section; belongs to the bacterial solute-binding protein 3 family. The protein in the C-terminal section; belongs to the transglycosylase Slt family.

The protein localises to the cell outer membrane. It catalyses the reaction Exolytic cleavage of the (1-&gt;4)-beta-glycosidic linkage between N-acetylmuramic acid (MurNAc) and N-acetylglucosamine (GlcNAc) residues in peptidoglycan, from either the reducing or the non-reducing ends of the peptidoglycan chains, with concomitant formation of a 1,6-anhydrobond in the MurNAc residue.. Murein-degrading enzyme that degrades murein glycan strands and insoluble, high-molecular weight murein sacculi, with the concomitant formation of a 1,6-anhydromuramoyl product. Lytic transglycosylases (LTs) play an integral role in the metabolism of the peptidoglycan (PG) sacculus. Their lytic action creates space within the PG sacculus to allow for its expansion as well as for the insertion of various structures such as secretion systems and flagella. In Shigella boydii serotype 18 (strain CDC 3083-94 / BS512), this protein is Membrane-bound lytic murein transglycosylase F.